The following is a 270-amino-acid chain: Type II restriction enzyme CeqI (270 aa).

It carries out the reaction Endonucleolytic cleavage of DNA to give specific double-stranded fragments with terminal 5'-phosphates.. A P subtype restriction enzyme that recognizes the double-stranded sequence 5'-GATATC-3' and cleaves after T-3. The polypeptide is Type II restriction enzyme CeqI (ceqIR) (Rhodococcus hoagii (Corynebacterium equii)).